A 226-amino-acid chain; its full sequence is Probable C4-dicarboxylate response regulator DctR (226 aa).

Residues 7–123 enclose the Response regulatory domain; it reads KVLLIEDDPM…RMRQALEKYK (117 aa). D58 is subject to 4-aspartylphosphate. Residues 179–198 constitute a DNA-binding region (H-T-H motif); it reads AEEVAKALGIARVTARRYLD.

Phosphorylated by DctS.

Its subcellular location is the cytoplasm. Functionally, member of the two-component regulatory system DctS/DctR. Essential for expression of dctP. The sequence is that of Probable C4-dicarboxylate response regulator DctR (dctR) from Bacillus subtilis (strain 168).